The primary structure comprises 190 residues: Elongation factor P (190 aa).

It belongs to the elongation factor P family.

The protein localises to the cytoplasm. It functions in the pathway protein biosynthesis; polypeptide chain elongation. Its function is as follows. Involved in peptide bond synthesis. Stimulates efficient translation and peptide-bond synthesis on native or reconstituted 70S ribosomes in vitro. Probably functions indirectly by altering the affinity of the ribosome for aminoacyl-tRNA, thus increasing their reactivity as acceptors for peptidyl transferase. This Mycoplasma pneumoniae (strain ATCC 29342 / M129 / Subtype 1) (Mycoplasmoides pneumoniae) protein is Elongation factor P (efp).